The chain runs to 424 residues: MSLIKDAQRGLVTEEMKLVAAQEGVTEEFVRKGVAGGHIVIPVSPYRKVKICGIGEGLRTKVNASIGTSSDISDVSVEIEKVRQAELAGADTLMELSTGGDLADIRRQVIAATSLSVGSVPLYQAFIEAAHKKGAVVDMEADDLFRITAEQAKAGTNFMAIHTGINYETMKRLQNQGRHAGLVSRGGAFMTAWMLHNEKENPLYAEFDYLLEIMKEHEVTLSMGNGMRAGAVHDSTDRAAIQELLINAELADKAFNEGVQTIVEGPGHVPIDEIQANVILQKRVTNRKPFYMLGPLVTDIAPGYDDRVAMVGAALSSSYGADFICYVTPAEHLALPTPEEVFEGVISSRIAAHIGDMVKLNKRDDDLEMGHARKALDWDRQYAVAINPKRAKEIRDSRMPADTDGCTMCGDYCAIKIVAKHFNF.

Substrate is bound by residues Met-94, Tyr-123, His-162, 184–186, 225–228, and Glu-264; these read SRG and NGMR. A Zn(2+)-binding site is contributed by His-268. Tyr-291 is a binding site for substrate. His-332 contacts Zn(2+). Residues Cys-406, Cys-409, and Cys-413 each contribute to the [4Fe-4S] cluster site.

This sequence belongs to the ThiC family. [4Fe-4S] cluster is required as a cofactor.

It catalyses the reaction 5-amino-1-(5-phospho-beta-D-ribosyl)imidazole + S-adenosyl-L-methionine = 4-amino-2-methyl-5-(phosphooxymethyl)pyrimidine + CO + 5'-deoxyadenosine + formate + L-methionine + 3 H(+). The protein operates within cofactor biosynthesis; thiamine diphosphate biosynthesis. Catalyzes the synthesis of the hydroxymethylpyrimidine phosphate (HMP-P) moiety of thiamine from aminoimidazole ribotide (AIR) in a radical S-adenosyl-L-methionine (SAM)-dependent reaction. This is Phosphomethylpyrimidine synthase from Methanosphaerula palustris (strain ATCC BAA-1556 / DSM 19958 / E1-9c).